The chain runs to 1358 residues: Indole-3-acetaldehyde oxidase (1358 aa).

The 2Fe-2S ferredoxin-type domain maps to 11-98 (STVVLAVNGK…RCSVTTSEGI (88 aa)). Positions 50, 55, and 58 each coordinate [2Fe-2S] cluster. The FAD-binding PCMH-type domain maps to 241-419 (IAASGDGWYH…LSIFIPEWGS (179 aa)). The tract at residues 532–559 (SSAPSNIDTPNGSYTHETGSNVDSPERH) is disordered. Over residues 537-554 (NIDTPNGSYTHETGSNVD) the composition is skewed to polar residues.

The protein belongs to the xanthine dehydrogenase family. Aldehyde oxidases (AO) are homodimers and heterodimers of AO subunits. [2Fe-2S] cluster serves as cofactor. It depends on FAD as a cofactor. The cofactor is Mo-molybdopterin. As to expression, mostly expressed in roots, and, to a lower extent, in mesocotyl, leaves and coleoptile. Accumulates in apical region of maize coleoptiles (at protein level).

It is found in the cytoplasm. The catalysed reaction is indole-3-acetaldehyde + O2 + H2O = (indol-3-yl)acetate + H2O2 + H(+). Its activity is regulated as follows. Inhibited by 2-mercaptoethanol, p-chloromercuribenzoate, and iodoacetate. In terms of biological role, in higher plants aldehyde oxidases (AO) appear to be homo- and heterodimeric assemblies of AO subunits with probably different physiological functions. Involved in the biosynthesis of auxin from (indol-3-yl)acetaldehyde. Can also use indole-3-aldehyde and benzaldehyde as substrate. In Zea mays (Maize), this protein is Indole-3-acetaldehyde oxidase (AO1).